A 1322-amino-acid polypeptide reads, in one-letter code: MAWMTYISNWFEQDDWYEGLQRANMSQVRQVGLLAAGCQPWNKDVCAASGDRFAYCATLAIYIYQLDHRYNEFKLHAIMSEHKKTITAISWCPHNPDLFASGSTDNLVIIWNVAEQKVIAKLDSTKGIPASLSWCWNAEDVVAFVSHRGPLFIWTISGPDSGVIVHKDAHSFLSDICMFRWHTHQKGKVVFGHIDGSLSIFHPGNKNQKHVLRPESLEGTDEEDPVTALEWDPLSTDYLLVVNLHYGIRLVDSESLSCITTFNLPSAAASVQCLAWVPSAPGMFITGDSQVGVLRIWNVSRTTPIDNLKLKKTGFHCLHVLNSPPRKKFSVQSPTKNHYTSSTSEAVPPPTLTQNQAFSLPPGHAVCCFLDGGVGLYDMGAKKWDFLRDLGHVETIFDCKFKPDDPNLLATASFDGTIKVWDINTLTAVYTSPGNEGVIYSLSWAPGGLNCIAGGTSRNGAFIWNVQKGKIIQRFNEHGTNGIFCIAWSHKDSKRIATCSSDGFCIIRTIDGKVLHKYKHPAAVFGCDWSQNNKDMIATGCEDTNVRVYYVATSSDQPLKVFSGHTAKVFHVKWSPLREGILCSGSDDGTVRIWDYTQDACINILNGHTAPVRGLMWNTEIPYLLISGSWDYTIKVWDTREGTCVDTVYDHGADVYGLTCHPSRPFTMASCSRDSTVRLWSLTALVTPVQINILADRSWEEIIGNTDYAIEPGTPPLLCGKVSRDIRQEIEKLTANSQVKKLRWFSECLSPPGGSDNLWNLVAVIKGQDDSLLPQNYCKGIMHLKHLIKFRTSEAQELTTVKMSKFGGGIGVPAKEERLKEAAEIHLRLGQIQRYCELMVELGEWDKALSIAPGVSVKYWKKLMQRRADQLIQEDKDDVIPYCIAIGDVKKLVHFFMSRGQLKEALLVAQAACEGNMQPLHVSVPKGASYSDDIYKEDFNELLHKVSKELAEWYFQDGRAVLAACCHLAIDNIELAMAYLIRGNELELAVCVGTVLGESAAPATHYALELLARKCMMISVCFPCVGYSVPFCYVNRNLAADLLLMIPDNELHLIKLCAFYPGCTEEINDLHDKCKLPTVEECMQLAETARADDNIFETVKYYLLSQEPEKALPIGISFVKEYISSSDWTLDTIYPVLDLLSYIRTEKLLLHTCTEARNELLILCGYIGALLAIRRQYQSIVPALYEYTSQLLKRREVSVPLKIEYLSEELDAWRACTQSTNRSLEDSPYTPPSDSQRMIYATLLKRLKEESLKGIIGPDYVTGSNLPSHSDIHISCLTGLKIQGPVFFLEDGKSAISLNDALMWAKVNPFSPLGTGIRLNPF.

5 WD repeats span residues 81–121 (EHKK…VIAK), 123–164 (DSTK…SGVI), 171–211 (SFLS…QKHV), 221–261 (DEED…CITT), and 266–307 (SAAA…PIDN). Residues 328-352 (KFSVQSPTKNHYTSSTSEAVPPPTL) are disordered. Polar residues predominate over residues 330-345 (SVQSPTKNHYTSSTSE). WD repeat units lie at residues 391–431 (GHVE…AVYT), 434–474 (GNEG…IIQR), 478–518 (HGTN…LHKY), 519–559 (KHPA…DQPL), 564–604 (GHTA…CINI), 607–647 (GHTA…CVDT), and 650–690 (DHGA…TPVQ).

The chain is WD repeat-containing protein 17 (WDR17) from Homo sapiens (Human).